We begin with the raw amino-acid sequence, 402 residues long: Phosphoglycerate kinase (402 aa).

Substrate contacts are provided by residues 24–26 (DFN), Arg40, 63–66 (HFGR), Arg122, and Arg155. Residues Lys206, Gly297, Glu328, and 358–361 (GGDS) each bind ATP.

The protein belongs to the phosphoglycerate kinase family. Monomer.

Its subcellular location is the cytoplasm. The enzyme catalyses (2R)-3-phosphoglycerate + ATP = (2R)-3-phospho-glyceroyl phosphate + ADP. It participates in carbohydrate degradation; glycolysis; pyruvate from D-glyceraldehyde 3-phosphate: step 2/5. The polypeptide is Phosphoglycerate kinase (Prochlorococcus marinus (strain MIT 9301)).